The primary structure comprises 172 residues: ATP synthase subunit b (172 aa).

A helical transmembrane segment spans residues 18–38 (IVWSLIILVIVAVFFYKFFMP).

The protein belongs to the ATPase B chain family. As to quaternary structure, F-type ATPases have 2 components, F(1) - the catalytic core - and F(0) - the membrane proton channel. F(1) has five subunits: alpha(3), beta(3), gamma(1), delta(1), epsilon(1). F(0) has three main subunits: a(1), b(2) and c(10-14). The alpha and beta chains form an alternating ring which encloses part of the gamma chain. F(1) is attached to F(0) by a central stalk formed by the gamma and epsilon chains, while a peripheral stalk is formed by the delta and b chains.

It is found in the cell membrane. Its function is as follows. F(1)F(0) ATP synthase produces ATP from ADP in the presence of a proton or sodium gradient. F-type ATPases consist of two structural domains, F(1) containing the extramembraneous catalytic core and F(0) containing the membrane proton channel, linked together by a central stalk and a peripheral stalk. During catalysis, ATP synthesis in the catalytic domain of F(1) is coupled via a rotary mechanism of the central stalk subunits to proton translocation. Component of the F(0) channel, it forms part of the peripheral stalk, linking F(1) to F(0). This is ATP synthase subunit b from Bifidobacterium longum (strain DJO10A).